The chain runs to 59 residues: Embryonic testis differentiation protein (59 aa).

Residues 1-28 (MDEKNPEAVPRPPEQNTELVPPKKSKSK) are disordered.

As to expression, specifically expressed in testis.

This Mus musculus (Mouse) protein is Embryonic testis differentiation protein.